We begin with the raw amino-acid sequence, 536 residues long: Velvet complex subunit B (536 aa).

A compositionally biased stretch (polar residues) spans methionine 1–serine 26. Disordered stretches follow at residues methionine 1–arginine 27, proline 106–phenylalanine 143, serine 157–valine 409, and lysine 508–aspartate 536. Residues glycine 25–arginine 512 form the Velvet domain. The segment covering proline 114–phenylalanine 143 has biased composition (pro residues). 2 stretches are compositionally biased toward low complexity: residues alanine 158–alanine 170 and proline 190–tyrosine 265. The span at threonine 280 to threonine 305 shows a compositional bias: polar residues. The segment covering alanine 306–glutamate 315 has biased composition (basic and acidic residues). The span at proline 328–threonine 342 shows a compositional bias: low complexity. The span at glutamate 356–alanine 399 shows a compositional bias: basic and acidic residues. Residues glutamine 400–valine 409 show a composition bias toward polar residues. The segment covering leucine 511 to glycine 525 has biased composition (basic residues).

Belongs to the velvet family. VelB subfamily. In terms of assembly, component of the heterotrimeric velvet complex composed of laeA, veA and velB; VeA acting as a bridging protein between laeA and velB. Forms a heterodimeric complex with vosA; the formation of the velB-vosA complex is light-dependent.

It localises to the nucleus. The protein resides in the cytoplasm. Component of the velvet transcription factor complex that controls sexual/asexual developmental ratio in response to light, promoting sexual development in the darkness while stimulating asexual sporulation under illumination. The velvet complex acts as a global regulator for secondary metabolite gene expression. Component of the velB-VosA heterodimeric complex that plays a dual role in activating genes associated with spore maturation and repressing certain development-associated genes. The velB-VosA complex binds DNA through the DNA-binding domain of vosA that recognizes an 11-nucleotide consensus sequence 5'-CTGGCCGCGGC-3' consisting of two motifs in the promoters of key developmental regulatory genes. The protein is Velvet complex subunit B of Schizophyllum commune (strain H4-8 / FGSC 9210) (Split gill fungus).